A 693-amino-acid chain; its full sequence is Elongation factor G (693 aa).

The 275-residue stretch at 8–282 folds into the tr-type G domain; it reads AKTRNIGIMA…AVIDYLPSPL (275 aa). GTP contacts are provided by residues 17 to 24, 81 to 85, and 135 to 138; these read AHVDAGKT, DTPGH, and NKMD.

It belongs to the TRAFAC class translation factor GTPase superfamily. Classic translation factor GTPase family. EF-G/EF-2 subfamily.

It localises to the cytoplasm. Catalyzes the GTP-dependent ribosomal translocation step during translation elongation. During this step, the ribosome changes from the pre-translocational (PRE) to the post-translocational (POST) state as the newly formed A-site-bound peptidyl-tRNA and P-site-bound deacylated tRNA move to the P and E sites, respectively. Catalyzes the coordinated movement of the two tRNA molecules, the mRNA and conformational changes in the ribosome. The polypeptide is Elongation factor G (Streptococcus thermophilus (strain CNRZ 1066)).